Here is a 467-residue protein sequence, read N- to C-terminus: Coiled-coil domain-containing protein 71 (467 aa).

The disordered stretch occupies residues 81-105 (PSQTKLQARAPNPTATSPPASAPRT). Low complexity predominate over residues 88 to 105 (ARAPNPTATSPPASAPRT). Residue Ser-129 is modified to Phosphoserine. Disordered regions lie at residues 211–280 (KLRK…GTKT) and 349–416 (VRAK…KAWL). The span at 253–265 (GHQSKTNRATGSP) shows a compositional bias: polar residues. A coiled-coil region spans residues 279–359 (KTAQAKVART…RAKAKVARTQ (81 aa)). The span at 349-380 (VRAKAKVARTQPRGRGRPKGSAKARTTRKGQK) shows a compositional bias: basic residues. Residues 392–401 (RAEEAKDLPP) show a composition bias toward basic and acidic residues.

The chain is Coiled-coil domain-containing protein 71 (CCDC71) from Homo sapiens (Human).